Here is a 417-residue protein sequence, read N- to C-terminus: Gap junction alpha-3 protein (417 aa).

The stretch at 2–15 is an intramembrane region; it reads GDWSFLGRLLENAQ. Residues 16–19 are Cytoplasmic-facing; that stretch reads EHST. The chain crosses the membrane as a helical span at residues 20–40; it reads VIGKVWLTVLFIFRILVLGAA. Residues 41 to 71 are Extracellular-facing; sequence AEEVWGDEQSDFTCNTQQPGCENVCYDRAFP. 3 disulfide bridges follow: C54/C198, C61/C192, and C65/C187. Residues 72–92 traverse the membrane as a helical segment; that stretch reads ISHIRFWALQIIFVSTPTLIY. At 93 to 158 the chain is on the cytoplasmic side; it reads LGHVLHIVRM…GALLRTYVFN (66 aa). Residues 110-128 are compositionally biased toward basic and acidic residues; that stretch reads EEELLRRDNPQHGRGREPM. A disordered region spans residues 110–141; that stretch reads EEELLRRDNPQHGRGREPMRTGSPRDPPLRDD. The helical transmembrane segment at 159–179 threads the bilayer; that stretch reads IIFKTLFEVGFIAGQYFLYGF. The Extracellular segment spans residues 180–207; that stretch reads QLQPLYRCDRWPCPNTVDCFISRPTEKT. The chain crosses the membrane as a helical span at residues 208–228; it reads IFVIFMLAVACASLVLNMLEI. Residues 229 to 417 are Cytoplasmic-facing; sequence YHLGWKKLKQ…GRARPGDLAI (189 aa). Disordered stretches follow at residues 247-267 and 334-417; these read DASE…SSGP and RQVA…DLAI. The span at 342 to 353 shows a compositional bias: low complexity; the sequence is PASKPSSAASSP.

The protein belongs to the connexin family. Alpha-type (group II) subfamily. As to quaternary structure, a hemichannel or connexon is composed of a hexamer of connexins. A functional gap junction is formed by the apposition of two hemichannels. Forms heteromeric channels with GJA8.

The protein localises to the cell membrane. The protein resides in the cell junction. It is found in the gap junction. Functionally, structural component of lens fiber gap junctions. Gap junctions are dodecameric channels that connect the cytoplasm of adjoining cells. They are formed by the docking of two hexameric hemichannels, one from each cell membrane. Small molecules and ions diffuse from one cell to a neighboring cell via the central pore. This is Gap junction alpha-3 protein (Gja3) from Mus musculus (Mouse).